The following is a 325-amino-acid chain: Anthranilate phosphoribosyltransferase (325 aa).

5-phospho-alpha-D-ribose 1-diphosphate is bound by residues G74, 77-78 (GD), T82, 84-87 (NVST), 101-109 (KHGNVSITS), and S113. G74 serves as a coordination point for anthranilate. Position 86 (S86) interacts with Mg(2+). N104 is an anthranilate binding site. R159 is an anthranilate binding site. D217 and E218 together coordinate Mg(2+).

This sequence belongs to the anthranilate phosphoribosyltransferase family. Homodimer. The cofactor is Mg(2+).

The catalysed reaction is N-(5-phospho-beta-D-ribosyl)anthranilate + diphosphate = 5-phospho-alpha-D-ribose 1-diphosphate + anthranilate. Its pathway is amino-acid biosynthesis; L-tryptophan biosynthesis; L-tryptophan from chorismate: step 2/5. In terms of biological role, catalyzes the transfer of the phosphoribosyl group of 5-phosphorylribose-1-pyrophosphate (PRPP) to anthranilate to yield N-(5'-phosphoribosyl)-anthranilate (PRA). The sequence is that of Anthranilate phosphoribosyltransferase from Thermococcus kodakarensis (strain ATCC BAA-918 / JCM 12380 / KOD1) (Pyrococcus kodakaraensis (strain KOD1)).